The sequence spans 177 residues: Transmembrane protein 196 (177 aa).

Transmembrane regions (helical) follow at residues 11–31, 47–67, 73–93, and 106–126; these read LLVL…VGAV, SSPV…IFCA, LIMI…ILNI, and LYSL…GCTI. Positions 152 to 162 are enriched in basic and acidic residues; sequence HSHEMTEKDTE. Residues 152-177 are disordered; the sequence is HSHEMTEKDTENITNGGGPLALNGRV.

It localises to the cytoplasm. Its subcellular location is the membrane. This chain is Transmembrane protein 196 (tmem196), found in Xenopus tropicalis (Western clawed frog).